We begin with the raw amino-acid sequence, 367 residues long: Palmitoyltransferase ERF2 (367 aa).

Polar residues predominate over residues 1–23; it reads MRLHSRQASNPHRQYSAAQSLHS. Positions 1–32 are disordered; sequence MRLHSRQASNPHRQYSAAQSLHSSSDDSEHKE. The Cytoplasmic portion of the chain corresponds to 1 to 87; sequence MRLHSRQASN…GRLRTVAKTK (87 aa). A helical membrane pass occupies residues 88–108; the sequence is YLSVLVLVMLIAPIVLFSVFE. Residues 109–121 are Lumenal-facing; that stretch reads TGYLWKHVAGAKP. A helical membrane pass occupies residues 122-142; that stretch reads CVVLCYYFWTLCFASFISTGA. The Cytoplasmic segment spans residues 143 to 229; the sequence is TDPGTLPRNI…NCIGQRNHRY (87 aa). In terms of domain architecture, DHHC spans 185–235; that stretch reads KYCTTCRIWRPPRASHCAVCDSCILSFDHHCDWLNNCIGQRNHRYFLAFLF. The S-palmitoyl cysteine intermediate role is filled by cysteine 215. Residues 230 to 250 traverse the membrane as a helical segment; it reads FLAFLFSSVLSSIWLLTCCAL. Over 251–262 the chain is Lumenal; it reads KLRHAGSPSAAP. Residues 263-283 traverse the membrane as a helical segment; sequence VSLLLICYCAVSIWYPLLLAI. Residues 284–367 lie on the Cytoplasmic side of the membrane; that stretch reads YHLFLTGTQQ…LPIPHSFEKV (84 aa).

The protein belongs to the DHHC palmitoyltransferase family. ERF2/ZDHHC9 subfamily. In terms of assembly, interacts with ERF4. Post-translationally, autopalmitoylated.

The protein localises to the endoplasmic reticulum membrane. The enzyme catalyses L-cysteinyl-[protein] + hexadecanoyl-CoA = S-hexadecanoyl-L-cysteinyl-[protein] + CoA. Functionally, the ERF2-ERF4 complex is a palmitoyltransferase specific for Ras proteins. This is Palmitoyltransferase ERF2 (ERF2) from Eremothecium gossypii (strain ATCC 10895 / CBS 109.51 / FGSC 9923 / NRRL Y-1056) (Yeast).